Consider the following 613-residue polypeptide: Probable potassium transport system protein Kup (613 aa).

Transmembrane regions (helical) follow at residues 38 to 58 (VLGV…LKYL), 91 to 111 (WILV…GMIT), 128 to 148 (PSFG…LFLF), 159 to 179 (FFGP…LVEI), 206 to 226 (FLVL…YADM), 238 to 258 (WSLL…AVLL), 270 to 290 (ALVP…ATII), 328 to 348 (IYVP…VAGF), 357 to 377 (AYGV…YYVA), 387 to 407 (GLNL…GASV), and 410 to 430 (LFHG…LMLT).

Belongs to the HAK/KUP transporter (TC 2.A.72) family.

The protein resides in the cell inner membrane. The enzyme catalyses K(+)(in) + H(+)(in) = K(+)(out) + H(+)(out). Its function is as follows. Transport of potassium into the cell. Likely operates as a K(+):H(+) symporter. In Chlorobaculum tepidum (strain ATCC 49652 / DSM 12025 / NBRC 103806 / TLS) (Chlorobium tepidum), this protein is Probable potassium transport system protein Kup.